The sequence spans 463 residues: Ribosomal protein uS12 methylthiotransferase RimO (463 aa).

An MTTase N-terminal domain is found at 15-130 (PKVGMVSLGC…VMQAVHSHLP (116 aa)). [4Fe-4S] cluster-binding residues include cysteine 24, cysteine 60, cysteine 89, cysteine 161, cysteine 165, and cysteine 168. The Radical SAM core domain maps to 147–392 (LTPRHYAYLK…MEVAEEVSAA (246 aa)). In terms of domain architecture, TRAM spans 395 to 463 (ARKIGKTLKV…ADGHDLWGEV (69 aa)).

The protein belongs to the methylthiotransferase family. RimO subfamily. It depends on [4Fe-4S] cluster as a cofactor.

It is found in the cytoplasm. The enzyme catalyses L-aspartate(89)-[ribosomal protein uS12]-hydrogen + (sulfur carrier)-SH + AH2 + 2 S-adenosyl-L-methionine = 3-methylsulfanyl-L-aspartate(89)-[ribosomal protein uS12]-hydrogen + (sulfur carrier)-H + 5'-deoxyadenosine + L-methionine + A + S-adenosyl-L-homocysteine + 2 H(+). Functionally, catalyzes the methylthiolation of an aspartic acid residue of ribosomal protein uS12. In Burkholderia mallei (strain NCTC 10229), this protein is Ribosomal protein uS12 methylthiotransferase RimO.